A 144-amino-acid chain; its full sequence is Acidic phospholipase A2 (144 aa).

The signal sequence occupies residues 1 to 19 (MYPAHLLVLLAVCVSLLGA). Residues 20-27 (SDIPPLPL) constitute a propeptide that is removed on maturation. Cystine bridges form between cysteine 38–cysteine 98, cysteine 54–cysteine 143, cysteine 56–cysteine 72, cysteine 71–cysteine 125, cysteine 78–cysteine 118, cysteine 87–cysteine 111, and cysteine 105–cysteine 116. Tyrosine 55, glycine 57, and glycine 59 together coordinate Ca(2+). Histidine 75 is a catalytic residue. Position 76 (aspartate 76) interacts with Ca(2+). Aspartate 119 is a catalytic residue.

The protein belongs to the phospholipase A2 family. Group I subfamily. D49 sub-subfamily. Ca(2+) serves as cofactor. Expressed by the venom gland.

Its subcellular location is the secreted. The enzyme catalyses a 1,2-diacyl-sn-glycero-3-phosphocholine + H2O = a 1-acyl-sn-glycero-3-phosphocholine + a fatty acid + H(+). Its function is as follows. PLA2 catalyzes the calcium-dependent hydrolysis of the 2-acyl groups in 3-sn-phosphoglycerides. This chain is Acidic phospholipase A2, found in Aipysurus laevis (Olive sea snake).